Here is a 241-residue protein sequence, read N- to C-terminus: Hybrid peroxiredoxin hyPrx5 (241 aa).

Residues 3-167 (SMEGKKVPQV…MLKYLAPQHQ (165 aa)) enclose the Thioredoxin domain. The active-site Cysteine sulfenic acid (-SOH) intermediate; for peroxiredoxin activity is Cys-49. A Glutaredoxin domain is found at 170-241 (ESISIFTKPG…GSDDLEKYFA (72 aa)). Cysteines 180 and 183 form a disulfide.

In the N-terminal section; belongs to the peroxiredoxin family. Prx5 subfamily. This sequence in the C-terminal section; belongs to the glutaredoxin family. Homotetramer; interconnecting Prx and Grx domains of different monomers.

The catalysed reaction is a hydroperoxide + 2 glutathione = an alcohol + glutathione disulfide + H2O. Thiol-specific peroxidase that catalyzes the reduction of hydrogen peroxide and organic hydroperoxides to water and alcohols, respectively. Plays a role in cell protection against oxidative stress by detoxifying peroxides. The chain is Hybrid peroxiredoxin hyPrx5 (PGdx) from Haemophilus influenzae (strain ATCC 51907 / DSM 11121 / KW20 / Rd).